A 52-amino-acid chain; its full sequence is Large ribosomal subunit protein bL33 (52 aa).

The protein belongs to the bacterial ribosomal protein bL33 family.

This Campylobacter jejuni subsp. jejuni serotype O:6 (strain 81116 / NCTC 11828) protein is Large ribosomal subunit protein bL33.